The chain runs to 185 residues: MTTEIMNELKSKMEKSIESLQRDFAAIRAGHANANLLDRVSVVYYGAETPVQQLAGISVPEPRMLLVTPYDKTSIDDILKAINMANLGVNPTSDGNVIRITVPALTEERRKELVKEAKKEAENSKIAIRNIRRDANDALKKAEKAGDITEDDLKSFSDDVQAETDKFIKKIDELTASKEKDILEV.

The protein belongs to the RRF family.

The protein localises to the cytoplasm. Responsible for the release of ribosomes from messenger RNA at the termination of protein biosynthesis. May increase the efficiency of translation by recycling ribosomes from one round of translation to another. The sequence is that of Ribosome-recycling factor from Macrococcus caseolyticus (strain JCSC5402) (Macrococcoides caseolyticum).